Consider the following 189-residue polypeptide: MVKMIVGLGNPGSKYEKTKHNIGFMAIDNIVKNLDVTFTDDKNFKAQIGSTFINHEKVCFVKPTTFMNNSGIAVKALLTYYNIDITDLIVIYDDLDMEVSKLRLRSKGSAGGHNGIKSIIAHIGTQEFNRIKVGIGRPLKGMTVINHVMGQFNTEDNIAISLTLDRVVNAVKFYLQENDFEKTMQKFNG.

Position 15 (Y15) interacts with tRNA. Residue H20 is the Proton acceptor of the active site. F66, N68, and N114 together coordinate tRNA.

This sequence belongs to the PTH family. As to quaternary structure, monomer.

The protein localises to the cytoplasm. It catalyses the reaction an N-acyl-L-alpha-aminoacyl-tRNA + H2O = an N-acyl-L-amino acid + a tRNA + H(+). Its function is as follows. Hydrolyzes ribosome-free peptidyl-tRNAs (with 1 or more amino acids incorporated), which drop off the ribosome during protein synthesis, or as a result of ribosome stalling. Catalyzes the release of premature peptidyl moieties from peptidyl-tRNA molecules trapped in stalled 50S ribosomal subunits, and thus maintains levels of free tRNAs and 50S ribosomes. The chain is Peptidyl-tRNA hydrolase from Streptococcus pyogenes serotype M3 (strain ATCC BAA-595 / MGAS315).